Here is a 403-residue protein sequence, read N- to C-terminus: S-adenosylmethionine synthase (403 aa).

Residue histidine 15 participates in ATP binding. Aspartate 17 contacts Mg(2+). Position 43 (glutamate 43) interacts with K(+). The L-methionine site is built by glutamate 56 and glutamine 99. Residues 99–109 are flexible loop; it reads QSPDINQGVDR. ATP is bound by residues 166–168, 232–233, aspartate 241, 247–248, alanine 264, and lysine 268; these read DAK, KF, and RK. Aspartate 241 is an L-methionine binding site. Lysine 272 provides a ligand contact to L-methionine.

Belongs to the AdoMet synthase family. As to quaternary structure, homotetramer; dimer of dimers. The cofactor is Mg(2+). It depends on K(+) as a cofactor.

Its subcellular location is the cytoplasm. It carries out the reaction L-methionine + ATP + H2O = S-adenosyl-L-methionine + phosphate + diphosphate. It participates in amino-acid biosynthesis; S-adenosyl-L-methionine biosynthesis; S-adenosyl-L-methionine from L-methionine: step 1/1. Catalyzes the formation of S-adenosylmethionine (AdoMet) from methionine and ATP. The overall synthetic reaction is composed of two sequential steps, AdoMet formation and the subsequent tripolyphosphate hydrolysis which occurs prior to release of AdoMet from the enzyme. The sequence is that of S-adenosylmethionine synthase from Xanthomonas campestris pv. campestris (strain 8004).